Consider the following 443-residue polypeptide: Dihydroorotase (443 aa).

The Zn(2+) site is built by histidine 80 and histidine 82. Substrate-binding positions include 82 to 84 and asparagine 114; that span reads HFR. Residues aspartate 170, histidine 197, and histidine 251 each coordinate Zn(2+). Asparagine 297 contributes to the substrate binding site. Aspartate 324 serves as a coordination point for Zn(2+). Aspartate 324 is a catalytic residue. Substrate contacts are provided by residues histidine 328 and 342-343; that span reads FG.

It belongs to the metallo-dependent hydrolases superfamily. DHOase family. Class I DHOase subfamily. The cofactor is Zn(2+).

It carries out the reaction (S)-dihydroorotate + H2O = N-carbamoyl-L-aspartate + H(+). It functions in the pathway pyrimidine metabolism; UMP biosynthesis via de novo pathway; (S)-dihydroorotate from bicarbonate: step 3/3. In terms of biological role, catalyzes the reversible cyclization of carbamoyl aspartate to dihydroorotate. This is Dihydroorotase from Wolbachia sp. subsp. Brugia malayi (strain TRS).